The sequence spans 319 residues: MKPENKSPVLDLISAGMKTVVNTLQPDLPPWPATGTIAEQRQYYTLERRFWNAGAPEMATRAYMVPTKYGQVETRLFCPQPDSPATLFYLHGGGFILGNLDTHDRIMRVLASYSQCTVIGIDYTLSPEARFPQAIEEIVAACCYFHQQAEDYQINMSRIGFAGDSAGAMLALASALWLRDKQIDCGKIAGVLLWYGLYGLRDSVTRRLLGGVWDGLTQQDLQMYEEAYLSNDADRESPYYCLFNNDLTREVPPCFIAGAEFDPLLDDSRLLYQTLAAHQQPCEFKLYPGTLHAFLHYSRMMKTADEALRDGAQFFTAQL.

The short motif at 91–93 (HGG) is the Involved in the stabilization of the negatively charged intermediate by the formation of the oxyanion hole element. Active-site residues include Ser165, Asp262, and His292.

It belongs to the 'GDXG' lipolytic enzyme family. As to quaternary structure, homodimer. Interacts with MalT and MelA.

It localises to the cytoplasm. Displays esterase activity towards short chain fatty esters (acyl chain length of up to 8 carbons). Able to hydrolyze triacetylglycerol (triacetin) and tributyrylglycerol (tributyrin), but not trioleylglycerol (triolein) or cholesterol oleate. Negatively regulates MalT activity by antagonizing maltotriose binding. Inhibits MelA galactosidase activity. The sequence is that of Acetyl esterase from Escherichia coli (strain ATCC 8739 / DSM 1576 / NBRC 3972 / NCIMB 8545 / WDCM 00012 / Crooks).